The chain runs to 465 residues: UDP-N-acetylmuramoylalanine--D-glutamate ligase (465 aa).

115–121 (GTDGKTT) lines the ATP pocket.

It belongs to the MurCDEF family.

Its subcellular location is the cytoplasm. It catalyses the reaction UDP-N-acetyl-alpha-D-muramoyl-L-alanine + D-glutamate + ATP = UDP-N-acetyl-alpha-D-muramoyl-L-alanyl-D-glutamate + ADP + phosphate + H(+). The protein operates within cell wall biogenesis; peptidoglycan biosynthesis. Functionally, cell wall formation. Catalyzes the addition of glutamate to the nucleotide precursor UDP-N-acetylmuramoyl-L-alanine (UMA). In Chlorobaculum tepidum (strain ATCC 49652 / DSM 12025 / NBRC 103806 / TLS) (Chlorobium tepidum), this protein is UDP-N-acetylmuramoylalanine--D-glutamate ligase.